Reading from the N-terminus, the 356-residue chain is Phosphoribosyl pyrophosphate synthase-associated protein 1 (356 aa).

Position 1 is an N-acetylmethionine (M1). A phosphoserine mark is found at S177 and S215.

Belongs to the ribose-phosphate pyrophosphokinase family. In terms of assembly, binds to PRPS1 and PRPS2.

Its function is as follows. Seems to play a negative regulatory role in 5-phosphoribose 1-diphosphate synthesis. This chain is Phosphoribosyl pyrophosphate synthase-associated protein 1 (Prpsap1), found in Mus musculus (Mouse).